Reading from the N-terminus, the 452-residue chain is Probable intron-encoded endonuclease 2 (452 aa).

The next 3 membrane-spanning stretches (helical) occupy residues 1–21 (MNIT…NRKN), 22–42 (IILM…LILV), and 57–77 (IYII…LVAF). A ndh-4L exon 1 encoded region spans residues 1 to 80 (MNITLILFLI…LAILVAFYRL (80 aa)). The segment at 81–452 (INSPVKNPRS…SLEGGMNKNI (372 aa)) is ndh-4L intron 1 encoded.

It in the N-terminal section; belongs to the complex I subunit 4L family. In the C-terminal section; belongs to the LAGLIDADG endonuclease family.

It is found in the mitochondrion membrane. In terms of biological role, mitochondrial DNA endonuclease involved in intron homing. This Neurospora crassa (strain ATCC 24698 / 74-OR23-1A / CBS 708.71 / DSM 1257 / FGSC 987) protein is Probable intron-encoded endonuclease 2.